The sequence spans 202 residues: Securin-2 (202 aa).

The tract at residues 60-105 (TRKALGTVNRATEKSVKTNGPRKQKQPSFSAKKMTEKTVKTKSSVP) is disordered. The short motif at 61–64 (RKAL) is the D-box element. The SH3-binding signature appears at 163 to 173 (PPSPVKMPSPP).

This sequence belongs to the securin family. As to expression, expressed at low levels in the pituitary, liver, spleen, prostate, testis, ovary, small intestine and colon. Also expressed in various pituitary, testicular, liver and ovarian tumors.

Its subcellular location is the cytoplasm. The protein resides in the nucleus. This is Securin-2 (PTTG2) from Homo sapiens (Human).